A 482-amino-acid chain; its full sequence is MKFIIKLFPEITIKSQSVRLRFIKILTGNIRNVLKHYDETLAVVRHWDNIEVRAKDENQRLAIRDALTRIPGIHHILEVEDVPFTDMHDIFEKALVQYRDQLEGKTFCVRVKRRGKHDFSSIDVERYVGGGLNQHIESARVKLTNPEVTVHLEVEDDRLLLIKGRYEGIGGFPIGTQEDVLSLISGGFDSGVSSYMLMRRGCRVHYCFFNLGGAAHEIGVRQVAHYLWNRFGSSHRVRFVAINFEPVVGEILEKIDDGQMGVILKRMMVRAASKVAERYGVQALVTGEALGQVSSQTLTNLRLIDNVSDTLILRPLISYDKEHIINLARQIGTEDFARTMPEYCGVISKSPTVKAVKSKIEAEEEKFDFSILDKVVEEANNVDIREIAQQTEQEVVEVETVNGFGPNDVILDIRSVDEQEDKPLKVEGIDVVSLPFYKLSTKFGDLDQNRTWLLWCERGVMSRLQALYLREQGFNNVKVYRP.

A THUMP domain is found at Leu-61–Arg-165. ATP-binding positions include Leu-183 to Ile-184, Lys-265, Gly-287, and Gln-296. A disulfide bridge connects residues Cys-344 and Cys-456. One can recognise a Rhodanese domain in the interval Phe-404–Pro-482. The active-site Cysteine persulfide intermediate is the Cys-456.

Belongs to the ThiI family.

It is found in the cytoplasm. The catalysed reaction is [ThiI sulfur-carrier protein]-S-sulfanyl-L-cysteine + a uridine in tRNA + 2 reduced [2Fe-2S]-[ferredoxin] + ATP + H(+) = [ThiI sulfur-carrier protein]-L-cysteine + a 4-thiouridine in tRNA + 2 oxidized [2Fe-2S]-[ferredoxin] + AMP + diphosphate. It carries out the reaction [ThiS sulfur-carrier protein]-C-terminal Gly-Gly-AMP + S-sulfanyl-L-cysteinyl-[cysteine desulfurase] + AH2 = [ThiS sulfur-carrier protein]-C-terminal-Gly-aminoethanethioate + L-cysteinyl-[cysteine desulfurase] + A + AMP + 2 H(+). The protein operates within cofactor biosynthesis; thiamine diphosphate biosynthesis. Functionally, catalyzes the ATP-dependent transfer of a sulfur to tRNA to produce 4-thiouridine in position 8 of tRNAs, which functions as a near-UV photosensor. Also catalyzes the transfer of sulfur to the sulfur carrier protein ThiS, forming ThiS-thiocarboxylate. This is a step in the synthesis of thiazole, in the thiamine biosynthesis pathway. The sulfur is donated as persulfide by IscS. This chain is tRNA sulfurtransferase, found in Escherichia coli O9:H4 (strain HS).